A 148-amino-acid chain; its full sequence is Sec-independent protein translocase protein TatB (148 aa).

Residues 2–22 (FNDIGPLELVTLVVLAVLVFG) form a helical membrane-spanning segment. Basic and acidic residues-rich tracts occupy residues 100–110 (VTDAVHGRESE) and 128–148 (MTKK…ADAT). Positions 100–148 (VTDAVHGRESETSASSSSANGSAGGTVDMTKKREQLEADERPPFDADAT) are disordered.

This sequence belongs to the TatB family. The Tat system comprises two distinct complexes: a TatABC complex, containing multiple copies of TatA, TatB and TatC subunits, and a separate TatA complex, containing only TatA subunits. Substrates initially bind to the TatABC complex, which probably triggers association of the separate TatA complex to form the active translocon.

The protein resides in the cell membrane. In terms of biological role, part of the twin-arginine translocation (Tat) system that transports large folded proteins containing a characteristic twin-arginine motif in their signal peptide across membranes. Together with TatC, TatB is part of a receptor directly interacting with Tat signal peptides. TatB may form an oligomeric binding site that transiently accommodates folded Tat precursor proteins before their translocation. The sequence is that of Sec-independent protein translocase protein TatB from Streptomyces avermitilis (strain ATCC 31267 / DSM 46492 / JCM 5070 / NBRC 14893 / NCIMB 12804 / NRRL 8165 / MA-4680).